A 368-amino-acid polypeptide reads, in one-letter code: MLIPLARAVLALELLGAGAAHAERLKDLASIQGVRGNQLIGYGLVVGLDGSGDQVRQTLFTQQSLTNMLSQLGITVPQGSNMQLKNVAAVMVTATLPSFARPGQTVDVVVSSMGNAKSLRGGTLLMTPLKGADNQVYVIAQGNLLVGGAGASAGGSSVQINQLNGGRISNGAIVERAVPTMYAQDGMVYLEMNNTDFGTTQNAATAINRQFGAGTAMALDGRVIQVRGPLDPSMMPAFMSQVENLQVARAPATAKVIINARTGSVVMNRTVMIEEAAVAHGNLSVIINRQNQVFQPDTPFTEGQTVVVPNTQIEVRQDGGALQRVTTSANLADVVKALNALGATPQDLLAILQAMKTAGALRADLEII.

The signal sequence occupies residues 1-22 (MLIPLARAVLALELLGAGAAHA).

Belongs to the FlgI family. As to quaternary structure, the basal body constitutes a major portion of the flagellar organelle and consists of four rings (L,P,S, and M) mounted on a central rod.

It localises to the periplasm. The protein resides in the bacterial flagellum basal body. Its function is as follows. Assembles around the rod to form the L-ring and probably protects the motor/basal body from shearing forces during rotation. This chain is Flagellar P-ring protein, found in Bordetella pertussis (strain Tohama I / ATCC BAA-589 / NCTC 13251).